The following is a 371-amino-acid chain: L-lysine 4-hydroxylase (371 aa).

Residues histidine 174, glutamate 176, and histidine 310 each contribute to the Fe cation site.

It belongs to the clavaminate synthase family. The cofactor is Fe(2+).

The enzyme catalyses L-lysine + 2-oxoglutarate + O2 = (4R)-4-hydroxy-L-lysine + succinate + CO2. In terms of biological role, alpha-ketoglutarate-dependent dioxygenase that in vitro catalyzes the regio- and stereoselective hydroxylation of L-lysine, leading to (4R)-4-hydroxy-L-lysine. The sequence is that of L-lysine 4-hydroxylase from Niastella koreensis (strain DSM 17620 / KACC 11465 / NBRC 106392 / GR20-10).